Reading from the N-terminus, the 311-residue chain is Bifunctional protein FolD (311 aa).

Residue Gly-174 to Gly-176 participates in NADP(+) binding.

The protein belongs to the tetrahydrofolate dehydrogenase/cyclohydrolase family. In terms of assembly, homodimer.

It catalyses the reaction (6R)-5,10-methylene-5,6,7,8-tetrahydrofolate + NADP(+) = (6R)-5,10-methenyltetrahydrofolate + NADPH. It carries out the reaction (6R)-5,10-methenyltetrahydrofolate + H2O = (6R)-10-formyltetrahydrofolate + H(+). It participates in one-carbon metabolism; tetrahydrofolate interconversion. Catalyzes the oxidation of 5,10-methylenetetrahydrofolate to 5,10-methenyltetrahydrofolate and then the hydrolysis of 5,10-methenyltetrahydrofolate to 10-formyltetrahydrofolate. This Pyrobaculum islandicum (strain DSM 4184 / JCM 9189 / GEO3) protein is Bifunctional protein FolD.